The following is a 392-amino-acid chain: S-adenosylmethionine synthase (392 aa).

Residue histidine 17 coordinates ATP. Aspartate 19 serves as a coordination point for Mg(2+). Glutamate 45 is a K(+) binding site. L-methionine contacts are provided by glutamate 58 and glutamine 102. The interval 102 to 112 is flexible loop; it reads QSADIAQGVDA. ATP is bound by residues 169–171, 235–236, aspartate 244, 250–251, alanine 267, and lysine 271; these read DAK, KF, and RK. Position 244 (aspartate 244) interacts with L-methionine. Lysine 275 lines the L-methionine pocket.

It belongs to the AdoMet synthase family. Homotetramer; dimer of dimers. Mg(2+) is required as a cofactor. K(+) serves as cofactor.

Its subcellular location is the cytoplasm. The enzyme catalyses L-methionine + ATP + H2O = S-adenosyl-L-methionine + phosphate + diphosphate. Its pathway is amino-acid biosynthesis; S-adenosyl-L-methionine biosynthesis; S-adenosyl-L-methionine from L-methionine: step 1/1. In terms of biological role, catalyzes the formation of S-adenosylmethionine (AdoMet) from methionine and ATP. The overall synthetic reaction is composed of two sequential steps, AdoMet formation and the subsequent tripolyphosphate hydrolysis which occurs prior to release of AdoMet from the enzyme. The chain is S-adenosylmethionine synthase from Methylobacterium radiotolerans (strain ATCC 27329 / DSM 1819 / JCM 2831 / NBRC 15690 / NCIMB 10815 / 0-1).